Here is a 114-residue protein sequence, read N- to C-terminus: Large ribosomal subunit protein bL20 (114 aa).

Belongs to the bacterial ribosomal protein bL20 family.

In terms of biological role, binds directly to 23S ribosomal RNA and is necessary for the in vitro assembly process of the 50S ribosomal subunit. It is not involved in the protein synthesizing functions of that subunit. This Flavobacterium johnsoniae (strain ATCC 17061 / DSM 2064 / JCM 8514 / BCRC 14874 / CCUG 350202 / NBRC 14942 / NCIMB 11054 / UW101) (Cytophaga johnsonae) protein is Large ribosomal subunit protein bL20.